Here is a 722-residue protein sequence, read N- to C-terminus: Ras and EF-hand domain-containing protein (722 aa).

EF-hand domains follow at residues Asp5–Val39 and Val39–Leu74. The segment covering His75–Glu84 has biased composition (basic and acidic residues). A disordered region spans residues His75–Trp109. A coiled-coil region spans residues Arg156–Asp335. Residues Ile355–Thr374 are compositionally biased toward polar residues. Disordered stretches follow at residues Ile355–Ser384 and Phe439–Ser491. Over residues Ser480–Ser491 the composition is skewed to low complexity. GTP is bound by residues Ala532–Ser537, Asn635–Asp638, and Ala672–Lys673.

It belongs to the small GTPase superfamily. Rab family. Homodimer.

Its subcellular location is the cytoplasm. It localises to the perinuclear region. In terms of biological role, binds predominantly GDP, and also GTP. The protein is Ras and EF-hand domain-containing protein (rasef) of Xenopus tropicalis (Western clawed frog).